A 371-amino-acid polypeptide reads, in one-letter code: Glyco-Gag protein (371 aa).

Over 1–51 (MSGASSGTAIGAHLFGVSPEYRVLIGDEGAGPSKSLSEVSFSVWYRSRAAR) the chain is Cytoplasmic. The helical transmembrane segment at 52–72 (LVILCLVASFLVPCLTFLIAE) threads the bilayer. Topologically, residues 73 to 371 (AVMGQTVTTP…NVIDETFPLT (299 aa)) are extracellular. Residue asparagine 134 is glycosylated (N-linked (GlcNAc...) asparagine; by host). 2 disordered regions span residues 171 to 281 (VRPF…NNRP) and 350 to 371 (VPGE…FPLT). Residues 174–193 (FLPPPKPPTPLPQPLSPQPS) show a composition bias toward pro residues. Residues 194 to 203 (APLTSSLYPV) are compositionally biased toward low complexity. Composition is skewed to pro residues over residues 204–220 (VPKP…PDPS) and 230–245 (EPPP…PSGP).

In terms of processing, glycosylated by host. Post-translationally, cleaved by host near the middle of the molecule, releasing the c-terminal half containing capsid and nucleoprotein domains op GAG.

It localises to the host cell membrane. Plays a role in viral particle release. Presumably acts by facilitating the fission of the virion bud at the cell surface. This Feline sarcoma virus (strain Snyder-Theilen) protein is Glyco-Gag protein.